An 82-amino-acid polypeptide reads, in one-letter code: Cytochrome c-551 (82 aa).

Residues cysteine 12, cysteine 15, histidine 16, and methionine 61 each contribute to the heme c site.

Post-translationally, binds 1 heme c group covalently per subunit.

Its function is as follows. This is a prokaryotic monoheme cytochrome, unreactive with mitochondrial cytochrome C oxidase or reductase. It functions in nitrite and nitrate respiration in Pseudomonas, but it is also found in other bacteria. The protein is Cytochrome c-551 of Ectopseudomonas mendocina (Pseudomonas mendocina).